We begin with the raw amino-acid sequence, 376 residues long: Succinyl-diaminopimelate desuccinylase (376 aa).

A Zn(2+)-binding site is contributed by His-66. Residue Asp-68 is part of the active site. Asp-99 provides a ligand contact to Zn(2+). Glu-133 serves as the catalytic Proton acceptor. Zn(2+) contacts are provided by Glu-134, Glu-162, and His-349.

Belongs to the peptidase M20A family. DapE subfamily. As to quaternary structure, homodimer. It depends on Zn(2+) as a cofactor. The cofactor is Co(2+).

It catalyses the reaction N-succinyl-(2S,6S)-2,6-diaminopimelate + H2O = (2S,6S)-2,6-diaminopimelate + succinate. It participates in amino-acid biosynthesis; L-lysine biosynthesis via DAP pathway; LL-2,6-diaminopimelate from (S)-tetrahydrodipicolinate (succinylase route): step 3/3. Its function is as follows. Catalyzes the hydrolysis of N-succinyl-L,L-diaminopimelic acid (SDAP), forming succinate and LL-2,6-diaminopimelate (DAP), an intermediate involved in the bacterial biosynthesis of lysine and meso-diaminopimelic acid, an essential component of bacterial cell walls. In Ruthia magnifica subsp. Calyptogena magnifica, this protein is Succinyl-diaminopimelate desuccinylase.